We begin with the raw amino-acid sequence, 334 residues long: MIKIAVAGGVTGGHLYPALATLNELQKITPIDVLYFTVKGKLEEKVLKDYNFKTVSLDVKGLIRPLYSFGNIKRILKILNAKNIVKKALKDFKPDIAFVTGGYVSYPVGVTAKQLGFLLYIHEQNVIPGLTNLKLSKIADKVFVSFESSKKYFEREVFVSGNPIFIHQKKLLNFDKKTVLIIGGSGGSEFLNELACKLAKKMKDLQFILSTGGKNIKCLEENLRAIDYIENMADYYQSVNCAITRGGATTVSELLYFQVPSIVIPWEGATESHQIENAKEIEKGNLGFVVREKDLDLNNLIDKIKILSSRERKIIKKENPATIIAKEIAKEVLK.

Residues 11–13 (TGG), N125, S185, I229, and Q274 contribute to the UDP-N-acetyl-alpha-D-glucosamine site.

The protein belongs to the glycosyltransferase 28 family. MurG subfamily.

It localises to the cell inner membrane. The enzyme catalyses di-trans,octa-cis-undecaprenyl diphospho-N-acetyl-alpha-D-muramoyl-L-alanyl-D-glutamyl-meso-2,6-diaminopimeloyl-D-alanyl-D-alanine + UDP-N-acetyl-alpha-D-glucosamine = di-trans,octa-cis-undecaprenyl diphospho-[N-acetyl-alpha-D-glucosaminyl-(1-&gt;4)]-N-acetyl-alpha-D-muramoyl-L-alanyl-D-glutamyl-meso-2,6-diaminopimeloyl-D-alanyl-D-alanine + UDP + H(+). It functions in the pathway cell wall biogenesis; peptidoglycan biosynthesis. Cell wall formation. Catalyzes the transfer of a GlcNAc subunit on undecaprenyl-pyrophosphoryl-MurNAc-pentapeptide (lipid intermediate I) to form undecaprenyl-pyrophosphoryl-MurNAc-(pentapeptide)GlcNAc (lipid intermediate II). This is UDP-N-acetylglucosamine--N-acetylmuramyl-(pentapeptide) pyrophosphoryl-undecaprenol N-acetylglucosamine transferase from Thermosipho melanesiensis (strain DSM 12029 / CIP 104789 / BI429).